The sequence spans 601 residues: tRNA 5-methylaminomethyl-2-thiouridine biosynthesis bifunctional protein MnmC (601 aa).

The tract at residues 1 to 237 (MSDPTASPLI…KKQRLEAVAP (237 aa)) is tRNA (mnm(5)s(2)U34)-methyltransferase. The interval 252-601 (IGGGIAGAAM…FSSRVATGAV (350 aa)) is FAD-dependent cmnm(5)s(2)U34 oxidoreductase.

In the N-terminal section; belongs to the methyltransferase superfamily. tRNA (mnm(5)s(2)U34)-methyltransferase family. It in the C-terminal section; belongs to the DAO family. The cofactor is FAD.

Its subcellular location is the cytoplasm. It catalyses the reaction 5-aminomethyl-2-thiouridine(34) in tRNA + S-adenosyl-L-methionine = 5-methylaminomethyl-2-thiouridine(34) in tRNA + S-adenosyl-L-homocysteine + H(+). Functionally, catalyzes the last two steps in the biosynthesis of 5-methylaminomethyl-2-thiouridine (mnm(5)s(2)U) at the wobble position (U34) in tRNA. Catalyzes the FAD-dependent demodification of cmnm(5)s(2)U34 to nm(5)s(2)U34, followed by the transfer of a methyl group from S-adenosyl-L-methionine to nm(5)s(2)U34, to form mnm(5)s(2)U34. In Caulobacter sp. (strain K31), this protein is tRNA 5-methylaminomethyl-2-thiouridine biosynthesis bifunctional protein MnmC.